Consider the following 421-residue polypeptide: 2',3'-cyclic-nucleotide 3'-phosphodiesterase (421 aa).

Phosphoserine occurs at positions 6 and 9. Phosphotyrosine is present on Tyr-110. Residue Ser-170 is modified to Phosphoserine. His-251 acts as the Proton acceptor in catalysis. Thr-253 is a substrate binding site. His-330 acts as the Proton donor in catalysis. Residue Thr-332 coordinates substrate. Residue Ser-359 is modified to Phosphoserine. Cys-418 is subject to Cysteine methyl ester. Cys-418 carries S-farnesyl cysteine lipidation. A propeptide spans Thr-419–Ile-421 (removed in mature form).

It belongs to the 2H phosphoesterase superfamily. CNPase family. As to quaternary structure, exists as monomers and homodimers.

The protein resides in the membrane. Its subcellular location is the melanosome. It carries out the reaction a nucleoside 2',3'-cyclic phosphate + H2O = a nucleoside 2'-phosphate + H(+). Catalyzes the formation of 2'-nucleotide products from 2',3'-cyclic substrates. May participate in RNA metabolism in the myelinating cell, CNP is the third most abundant protein in central nervous system myelin. This chain is 2',3'-cyclic-nucleotide 3'-phosphodiesterase, found in Homo sapiens (Human).